A 1273-amino-acid polypeptide reads, in one-letter code: DNA-directed RNA polymerase subunit beta (1273 aa).

Residues 1252 to 1273 (ADDQDLVVSSNDEEVSENDERS) form a disordered region.

It belongs to the RNA polymerase beta chain family. As to quaternary structure, the RNAP catalytic core consists of 2 alpha, 1 beta, 1 beta' and 1 omega subunit. When a sigma factor is associated with the core the holoenzyme is formed, which can initiate transcription.

It carries out the reaction RNA(n) + a ribonucleoside 5'-triphosphate = RNA(n+1) + diphosphate. DNA-dependent RNA polymerase catalyzes the transcription of DNA into RNA using the four ribonucleoside triphosphates as substrates. In Dehalococcoides mccartyi (strain CBDB1), this protein is DNA-directed RNA polymerase subunit beta.